The following is a 359-amino-acid chain: Glycerol-3-phosphate dehydrogenase [NAD(P)+] (359 aa).

T11, W12, R32, and K107 together coordinate NADPH. K107 and G138 together coordinate sn-glycerol 3-phosphate. Residue A142 participates in NADPH binding. Sn-glycerol 3-phosphate-binding residues include K193, D246, S256, R257, and N258. The active-site Proton acceptor is K193. R257 contacts NADPH. NADPH-binding residues include V281 and E283.

The protein belongs to the NAD-dependent glycerol-3-phosphate dehydrogenase family.

It localises to the cytoplasm. It catalyses the reaction sn-glycerol 3-phosphate + NAD(+) = dihydroxyacetone phosphate + NADH + H(+). The catalysed reaction is sn-glycerol 3-phosphate + NADP(+) = dihydroxyacetone phosphate + NADPH + H(+). Its pathway is membrane lipid metabolism; glycerophospholipid metabolism. Catalyzes the reduction of the glycolytic intermediate dihydroxyacetone phosphate (DHAP) to sn-glycerol 3-phosphate (G3P), the key precursor for phospholipid synthesis. In Dehalococcoides mccartyi (strain ATCC BAA-2100 / JCM 16839 / KCTC 5957 / BAV1), this protein is Glycerol-3-phosphate dehydrogenase [NAD(P)+].